A 397-amino-acid polypeptide reads, in one-letter code: S-adenosylmethionine synthase (397 aa).

ATP is bound at residue H16. D18 contacts Mg(2+). E44 is a binding site for K(+). L-methionine-binding residues include E57 and Q100. Positions 100–110 (QSPDIAQGVDN) are flexible loop. ATP-binding positions include 175-177 (DGK), 242-243 (RF), D251, 257-258 (RK), A274, and K278. Position 251 (D251) interacts with L-methionine. K282 provides a ligand contact to L-methionine.

This sequence belongs to the AdoMet synthase family. Homotetramer; dimer of dimers. It depends on Mg(2+) as a cofactor. K(+) is required as a cofactor.

It localises to the cytoplasm. The catalysed reaction is L-methionine + ATP + H2O = S-adenosyl-L-methionine + phosphate + diphosphate. Its pathway is amino-acid biosynthesis; S-adenosyl-L-methionine biosynthesis; S-adenosyl-L-methionine from L-methionine: step 1/1. Functionally, catalyzes the formation of S-adenosylmethionine (AdoMet) from methionine and ATP. The overall synthetic reaction is composed of two sequential steps, AdoMet formation and the subsequent tripolyphosphate hydrolysis which occurs prior to release of AdoMet from the enzyme. The protein is S-adenosylmethionine synthase of Leifsonia xyli subsp. xyli (strain CTCB07).